A 57-amino-acid polypeptide reads, in one-letter code: Large ribosomal subunit protein bL32 (57 aa).

A compositionally biased stretch (basic residues) spans 1–19 (MAVPKRRKSRSNTRSRRSQ). Residues 1–22 (MAVPKRRKSRSNTRSRRSQWKA) are disordered.

Belongs to the bacterial ribosomal protein bL32 family.

This Mycobacterium tuberculosis (strain ATCC 25177 / H37Ra) protein is Large ribosomal subunit protein bL32.